Here is a 203-residue protein sequence, read N- to C-terminus: Putative 3-methyladenine DNA glycosylase (203 aa).

The protein belongs to the DNA glycosylase MPG family.

In Clostridium tetani (strain Massachusetts / E88), this protein is Putative 3-methyladenine DNA glycosylase.